The sequence spans 273 residues: Pyrroline-5-carboxylate reductase (273 aa).

Belongs to the pyrroline-5-carboxylate reductase family.

The protein localises to the cytoplasm. It catalyses the reaction L-proline + NADP(+) = (S)-1-pyrroline-5-carboxylate + NADPH + 2 H(+). The catalysed reaction is L-proline + NAD(+) = (S)-1-pyrroline-5-carboxylate + NADH + 2 H(+). It functions in the pathway amino-acid biosynthesis; L-proline biosynthesis; L-proline from L-glutamate 5-semialdehyde: step 1/1. This chain is Pyrroline-5-carboxylate reductase (PROC), found in Pisum sativum (Garden pea).